Here is a 689-residue protein sequence, read N- to C-terminus: Protein asunder (689 aa).

Residues 521 to 550 are a coiled coil; the sequence is NGARLKLSKAKDQYRLLYRELEQLIQLNAT. 2 disordered regions span residues 578 to 619 and 662 to 689; these read GASL…SKRR and PDFGNKDKDTVASGASITPNVKEESVRS. The span at 599 to 614 shows a compositional bias: low complexity; sequence SSGSASGSSNSNSLLK. The Nuclear localization signal (NLS) signature appears at 613-619; it reads LKASKRR.

The protein belongs to the Integrator subunit 13 family. In terms of assembly, belongs to the multiprotein complex Integrator, at least composed of IntS1, IntS2, IntS3, IntS4, omd/IntS5, IntS6, defl/IntS7, IntS8, IntS9, IntS10, IntS11, IntS12, asun/IntS13, IntS14 and IntS15. The core complex associates with protein phosphatase 2A subunits mts/PP2A and Pp2A-29B, to form the Integrator-PP2A (INTAC) complex. Post-translationally, phosphorylated.

The protein localises to the nucleus. The protein resides in the cytoplasm. It is found in the perinuclear region. Component of the integrator complex, a multiprotein complex that terminates RNA polymerase II (Pol II) transcription in the promoter-proximal region of genes. The integrator complex provides a quality checkpoint during transcription elongation by driving premature transcription termination of transcripts that are unfavorably configured for transcriptional elongation: the complex terminates transcription by (1) catalyzing dephosphorylation of the C-terminal domain (CTD) of Pol II subunit Polr2A/Rbp1 and Spt5, and (2) degrading the exiting nascent RNA transcript via endonuclease activity. The integrator complex is also involved in the 3'-end processing of the U7 snRNA, and also the spliceosomal snRNAs U1, U2, U4 and U5. The polypeptide is Protein asunder (asun) (Drosophila yakuba (Fruit fly)).